The primary structure comprises 370 residues: Actin-related protein 2/3 complex subunit 1A (370 aa).

6 WD repeats span residues 6 to 45 (FLLE…WVKA), 50 to 89 (EHNG…WKPT), 140 to 179 (PIRS…VDEK), 202 to 241 (GTGG…QVST), 244 to 284 (TEFL…TFVS), and 322 to 365 (LHQN…SSIQ).

This sequence belongs to the WD repeat ARPC1 family. As to quaternary structure, probable component of the Arp2/3 complex in which it may replace ARPC1B. In addition to its role in the cytoplasmic cytoskeleton, the Arp2/3 complex also promotes actin polymerization in the nucleus, thereby regulating gene transcription and repair of damaged DNA.

The protein resides in the cytoplasm. It is found in the cytoskeleton. The protein localises to the nucleus. In terms of biological role, probably functions as a component of the Arp2/3 complex which is involved in regulation of actin polymerization and together with an activating nucleation-promoting factor (NPF) mediates the formation of branched actin networks. The polypeptide is Actin-related protein 2/3 complex subunit 1A (ARPC1A) (Homo sapiens (Human)).